The chain runs to 278 residues: MEMLEEHRCFQGWQQRWRHDSSTLNCPMTFSIFLPPPRDHTPPPVLYWLSGLTCNDENFTTKAGAQRVAAELGIVLVMPDTSPRGEKVANGDGYDLGQSAGFYLNATQPPWATHYRMYDYLRDELPALVQSQFNVSDRCAISGHSMGGHGALIMALKNPGKYTSVSAFAPIVNPCSVPWGIKAFSRYLGEDKNAWLEWDRCALMYASNAQDAIPTLIDQGDNDQFLADQLQPAVLAEAARQKAWPMTLRIQPGYDHSYYFIASFIEDHLRFHAQYLLK.

Catalysis depends on charge relay system residues Ser-145, Asp-223, and His-256.

This sequence belongs to the esterase D family.

The enzyme catalyses S-formylglutathione + H2O = formate + glutathione + H(+). In terms of biological role, serine hydrolase involved in the detoxification of formaldehyde. Hydrolyzes S-formylglutathione to glutathione and formate. In Shigella dysenteriae serotype 1 (strain Sd197), this protein is S-formylglutathione hydrolase YeiG (yeiG).